The following is a 228-amino-acid chain: Thymidylate kinase (228 aa).

20–27 (GGEGSGKS) provides a ligand contact to ATP.

Belongs to the thymidylate kinase family.

It catalyses the reaction dTMP + ATP = dTDP + ADP. In terms of biological role, phosphorylation of dTMP to form dTDP in both de novo and salvage pathways of dTTP synthesis. The sequence is that of Thymidylate kinase from Afipia carboxidovorans (strain ATCC 49405 / DSM 1227 / KCTC 32145 / OM5) (Oligotropha carboxidovorans).